A 345-amino-acid polypeptide reads, in one-letter code: Phosphoribosylformylglycinamidine cyclo-ligase (345 aa).

This sequence belongs to the AIR synthase family.

The protein resides in the cytoplasm. The enzyme catalyses 2-formamido-N(1)-(5-O-phospho-beta-D-ribosyl)acetamidine + ATP = 5-amino-1-(5-phospho-beta-D-ribosyl)imidazole + ADP + phosphate + H(+). The protein operates within purine metabolism; IMP biosynthesis via de novo pathway; 5-amino-1-(5-phospho-D-ribosyl)imidazole from N(2)-formyl-N(1)-(5-phospho-D-ribosyl)glycinamide: step 2/2. This Histophilus somni (strain 129Pt) (Haemophilus somnus) protein is Phosphoribosylformylglycinamidine cyclo-ligase.